The sequence spans 248 residues: Tabinhibitin 10 (248 aa).

Residues 1 to 22 (MTLKRIFCAALALIVLQSVASA) form the signal peptide. Residues 66-208 (LQKTNWLRGV…NYKGAFHCSL (143 aa)) enclose the SCP domain. The short motif at 221–223 (RGD) is the Cell attachment site element.

This sequence belongs to the CRISP family. In terms of tissue distribution, expressed in salivary glands.

Its subcellular location is the secreted. Functionally, inhibits platelet aggregation induced by all agonists tested (ADP, arachidonic acid, the thromboxane A2 analog U46619, thrombin, and snake venom snaclecs (TMVA that activates platelet through GPIB, and stejnulxin that specifically acts through GPVI (GP6))). May act by competing with fibrinogen for binding to glycoprotein IIb/IIIa (ITGA2B/ITGB3). This is Tabinhibitin 10 from Tabanus yao (Horsefly).